The following is a 127-amino-acid chain: Large ribosomal subunit protein bL12 (127 aa).

This sequence belongs to the bacterial ribosomal protein bL12 family. In terms of assembly, homodimer. Part of the ribosomal stalk of the 50S ribosomal subunit. Forms a multimeric L10(L12)X complex, where L10 forms an elongated spine to which 2 to 4 L12 dimers bind in a sequential fashion. Binds GTP-bound translation factors.

Functionally, forms part of the ribosomal stalk which helps the ribosome interact with GTP-bound translation factors. Is thus essential for accurate translation. This Symbiobacterium thermophilum (strain DSM 24528 / JCM 14929 / IAM 14863 / T) protein is Large ribosomal subunit protein bL12.